A 133-amino-acid polypeptide reads, in one-letter code: Small ribosomal subunit protein uS11 (133 aa).

It belongs to the universal ribosomal protein uS11 family. Part of the 30S ribosomal subunit.

Its function is as follows. Located on the platform of the 30S subunit. This is Small ribosomal subunit protein uS11 from Pyrobaculum aerophilum (strain ATCC 51768 / DSM 7523 / JCM 9630 / CIP 104966 / NBRC 100827 / IM2).